The following is a 171-amino-acid chain: Large ribosomal subunit protein bL9 (171 aa).

It belongs to the bacterial ribosomal protein bL9 family.

Binds to the 23S rRNA. In Rickettsia prowazekii (strain Madrid E), this protein is Large ribosomal subunit protein bL9.